The primary structure comprises 299 residues: Tyrosine recombinase XerC (299 aa).

The Core-binding (CB) domain occupies 1–85 (MKRQLEAYCA…AVRGLYRYLN (85 aa)). The Tyr recombinase domain occupies 106 to 285 (RLPKVLDTDR…DFQHLAAVYD (180 aa)). Active-site residues include arginine 146, lysine 170, histidine 237, arginine 240, and histidine 263. Catalysis depends on tyrosine 272, which acts as the O-(3'-phospho-DNA)-tyrosine intermediate.

This sequence belongs to the 'phage' integrase family. XerC subfamily. As to quaternary structure, forms a cyclic heterotetrameric complex composed of two molecules of XerC and two molecules of XerD.

The protein localises to the cytoplasm. In terms of biological role, site-specific tyrosine recombinase, which acts by catalyzing the cutting and rejoining of the recombining DNA molecules. The XerC-XerD complex is essential to convert dimers of the bacterial chromosome into monomers to permit their segregation at cell division. It also contributes to the segregational stability of plasmids. The protein is Tyrosine recombinase XerC of Pseudomonas putida (strain ATCC 47054 / DSM 6125 / CFBP 8728 / NCIMB 11950 / KT2440).